We begin with the raw amino-acid sequence, 124 residues long: UPF0102 protein HCH_05895 (124 aa).

It belongs to the UPF0102 family.

This is UPF0102 protein HCH_05895 from Hahella chejuensis (strain KCTC 2396).